A 285-amino-acid chain; its full sequence is Taffazin (285 aa).

Residues 1-23 (MDSNNSNNNNKNLKQICDIPKPQ) lie on the Mitochondrial intermembrane side of the membrane. An intramembrane segment occupies 24 to 42 (FLSKGVFTLVGVLCKFWIS). Residues 43–285 (MNTVTTSGID…GRFSHPTIKD (243 aa)) lie on the Mitochondrial intermembrane side of the membrane. The HXXXXD motif motif lies at 74-79 (HSSNLD).

The protein belongs to the taffazin family.

It is found in the mitochondrion outer membrane. It localises to the mitochondrion inner membrane. It carries out the reaction a 1-acyl-sn-glycero-3-phosphate + a 1,2-diacyl-sn-glycero-3-phospho-(1'-sn-glycerol) = 1-acyl-sn-glycero-3-phospho-(1'-sn-glycerol) + a 1,2-diacyl-sn-glycero-3-phosphate. The enzyme catalyses 1-hexadecanoyl-2-(9Z,12Z-octadecadienoyl)-sn-glycero-3-phospho-(1'-sn-glycerol) + 1-(9Z-octadecenoyl)-sn-glycero-3-phosphate = 1-(9Z)-octadecenoyl-2-(9Z,12Z)-octadecadienoyl-sn-glycero-3-phosphate + 1-hexadecanoyl-sn-glycero-3-phospho-(1'-sn-glycerol). It catalyses the reaction 1'-[1,2-diacyl-sn-glycero-3-phospho],3'-[1-acyl-sn-glycero-3-phospho]-glycerol + a 1,2-diacyl-sn-glycero-3-phosphocholine = a cardiolipin + a 1-acyl-sn-glycero-3-phosphocholine. The catalysed reaction is 1-hexadecanoyl-2-(9Z,12Z-octadecadienoyl)-sn-glycero-3-phosphocholine + 1-hexadecanoyl-sn-glycero-3-phosphocholine = 2-(9Z,12Z-octadecadienoyl)-sn-glycero-3-phosphocholine + 1,2-dihexadecanoyl-sn-glycero-3-phosphocholine. It carries out the reaction 1,2-di-(9Z-octadecenoyl)-sn-glycero-3-phosphocholine + 1-hexadecanoyl-sn-glycero-3-phosphocholine = 1-hexadecanoyl-2-(9Z-octadecenoyl)-sn-glycero-3-phosphocholine + 1-(9Z-octadecenoyl)-sn-glycero-3-phosphocholine. Its pathway is phospholipid metabolism. Functionally, acyltransferase required to remodel newly synthesized phospholipid cardiolipin (1',3'-bis-[1,2-diacyl-sn-glycero-3-phospho]-glycerol or CL), a key component of the mitochondrial inner membrane, with tissue specific acyl chains necessary for adequate mitochondrial function. Its role in cellular physiology is to improve mitochondrial performance. CL is critical for the coassembly of lipids and proteins in mitochondrial membranes, for instance, remodeling of the acyl groups of CL in the mitochondrial inner membrane affects the assembly and stability of respiratory chain complex IV and its supercomplex forms. Catalyzes the transacylation between phospholipids and lysophospholipids, with the highest rate being between phosphatidylcholine (1,2-diacyl-sn-glycero-3-phosphocholine or PC) and CL. Catalyzes both 1-acyl-sn-glycero-3-phosphocholine (lysophosphatidylcholine or LPC) reacylation and PC-CL transacylation, that means, it exchanges acyl groups between CL and PC by a combination of forward and reverse transacylations. Also catalyzes transacylations between other phospholipids such as phosphatidylethanolamine (1,2-diacyl-sn-glycero-3-phosphoethanolamine or PE) and CL, between PC and PE, and between PC and phosphatidate (1,2-diacyl-sn-glycero-3-phosphate or PA), although at lower rate. Not regiospecific, it transfers acyl groups into any of the sn-1 and sn-2 positions of the monolysocardiolipin (MLCL), which is an important prerequisite for uniformity and symmetry in CL acyl distribution. Cannot transacylate dilysocardiolipin (DLCL), thus, the role of MLCL is limited to that of an acyl acceptor. CoA-independent, it can reshuffle molecular species within a single phospholipid class. Redistributes fatty acids between MLCL, CL, and other lipids, which prolongs the half-life of CL. Its action is completely reversible, which allows for cyclic changes, such as fission and fusion or bending and flattening of the membrane. Hence, by contributing to the flexibility of the lipid composition, it plays an important role in the dynamics of mitochondria membranes. The polypeptide is Taffazin (taz) (Dictyostelium discoideum (Social amoeba)).